The primary structure comprises 273 residues: Exosome complex component MTR3 (273 aa).

The tract at residues 1–36 (MPGDHRRIRGPEESQPPQLYAAEDDETPAARDPTRL) is disordered.

It belongs to the RNase PH family. Component of the RNA exosome core complex (Exo-9), composed of EXOSC1, EXOSC2, EXOSC3, EXOSC4, EXOSC5, EXOSC6, EXOSC7, EXOSC8 and EXOSC9; within the complex interacts with EXOSC1, EXOSC7 and EXOSC8. The catalytically inactive RNA exosome core complex (Exo-9) associates with the catalytic subunit EXOSC10/RRP6. Exo-9 may associate with DIS3 to form the nucleolar exosome complex, or DIS3L to form the cytoplasmic exosome complex. Exo-9 is formed by a hexameric base ring consisting of the heterodimers EXOSC4-EXOSC9, EXOSC5-EXOSC8 and EXOSC6-EXOSC7, and a cap ring consisting of EXOSC1, EXOSC2 and EXOSC3. The RNA exosome complex associates with cofactors EXOSC10/RRP6, C1D/RRP47, MPHOSPH6/MPP6 and MTREX/MTR4.

It is found in the cytoplasm. The protein localises to the nucleus. The protein resides in the nucleolus. Its function is as follows. Non-catalytic component of the RNA exosome complex which has 3'-&gt;5' exoribonuclease activity and participates in a multitude of cellular RNA processing and degradation events. In the nucleus, the RNA exosome complex is involved in proper maturation of stable RNA species such as rRNA, snRNA and snoRNA, in the elimination of RNA processing by-products and non-coding 'pervasive' transcripts, such as antisense RNA species and promoter-upstream transcripts (PROMPTs), and of mRNAs with processing defects, thereby limiting or excluding their export to the cytoplasm. The RNA exosome may be involved in Ig class switch recombination (CSR) and/or Ig variable region somatic hypermutation (SHM) by targeting AICDA deamination activity to transcribed dsDNA substrates. In the cytoplasm, the RNA exosome complex is involved in general mRNA turnover and specifically degrades inherently unstable mRNAs containing AU-rich elements (AREs) within their 3' untranslated regions, and in RNA surveillance pathways, preventing translation of aberrant mRNAs. It seems to be involved in degradation of histone mRNA. The catalytic inactive RNA exosome core complex of 9 subunits (Exo-9) is proposed to play a pivotal role in the binding and presentation of RNA for ribonucleolysis, and to serve as a scaffold for the association with catalytic subunits and accessory proteins or complexes. The protein is Exosome complex component MTR3 (Exosc6) of Mus musculus (Mouse).